A 322-amino-acid polypeptide reads, in one-letter code: Ribosomal RNA small subunit methyltransferase H (322 aa).

Residues 40 to 42 (GGH), aspartate 60, phenylalanine 84, aspartate 106, and glutamine 113 each bind S-adenosyl-L-methionine.

This sequence belongs to the methyltransferase superfamily. RsmH family.

The protein localises to the cytoplasm. The enzyme catalyses cytidine(1402) in 16S rRNA + S-adenosyl-L-methionine = N(4)-methylcytidine(1402) in 16S rRNA + S-adenosyl-L-homocysteine + H(+). In terms of biological role, specifically methylates the N4 position of cytidine in position 1402 (C1402) of 16S rRNA. The protein is Ribosomal RNA small subunit methyltransferase H of Mannheimia succiniciproducens (strain KCTC 0769BP / MBEL55E).